We begin with the raw amino-acid sequence, 118 residues long: Cell division protein FtsB (118 aa).

Residues 1–6 (MRNWRW) are Cytoplasmic-facing. The chain crosses the membrane as a helical span at residues 7-24 (LLLVLAALLAWLQHRFWF). Residues 25 to 118 (GPGNSGEVRM…DLSQPRREKR (94 aa)) are Periplasmic-facing. Positions 30–66 (GEVRMLQVQIVQQHQENERLRQRNASLAAEVKNLKDG) form a coiled coil. Positions 98–118 (LPNDTSADHGVDLSQPRREKR) are disordered. Positions 103–118 (SADHGVDLSQPRREKR) are enriched in basic and acidic residues.

It belongs to the FtsB family. Part of a complex composed of FtsB, FtsL and FtsQ.

The protein localises to the cell inner membrane. Essential cell division protein. May link together the upstream cell division proteins, which are predominantly cytoplasmic, with the downstream cell division proteins, which are predominantly periplasmic. In Xylella fastidiosa (strain M12), this protein is Cell division protein FtsB.